The following is a 353-amino-acid chain: UPF0324 membrane protein PP_3661 (353 aa).

Transmembrane regions (helical) follow at residues 20-42, 70-92, 105-127, 137-159, 166-188, 234-253, 266-288, and 326-348; these read LNGI…MPAI, ASWA…AFFG, WSGL…WCGM, ALLT…ESAL, SAMA…PLAI, MTRV…WISR, IAMP…QVLP, and ALAT…TLGV.

It belongs to the UPF0324 family.

Its subcellular location is the cell membrane. This chain is UPF0324 membrane protein PP_3661, found in Pseudomonas putida (strain ATCC 47054 / DSM 6125 / CFBP 8728 / NCIMB 11950 / KT2440).